A 120-amino-acid chain; its full sequence is Large ribosomal subunit protein eL8 (120 aa).

The protein belongs to the eukaryotic ribosomal protein eL8 family. As to quaternary structure, part of the 50S ribosomal subunit. Probably part of the RNase P complex.

The protein localises to the cytoplasm. Functionally, multifunctional RNA-binding protein that recognizes the K-turn motif in ribosomal RNA, the RNA component of RNase P, box H/ACA, box C/D and box C'/D' sRNAs. This Methanosarcina mazei (strain ATCC BAA-159 / DSM 3647 / Goe1 / Go1 / JCM 11833 / OCM 88) (Methanosarcina frisia) protein is Large ribosomal subunit protein eL8.